Reading from the N-terminus, the 207-residue chain is MIOREX complex component 11 (207 aa).

The transit peptide at 1-46 (MTVMNLFFRPCQLQMGSGPLELMLKRPTQLTTFMNTRPGGSTQIRF) directs the protein to the mitochondrion. The Mitochondrial matrix segment spans residues 47 to 98 (ISGNLDPVKRREDRLRKIFSKSRLLTRLNKNPKFSHYFDRLSEAGTVPTLTS). The chain crosses the membrane as a helical span at residues 99–119 (FFILHEVTAILPLFLLWWLLY). Topologically, residues 120 to 177 (NLDLSDDFKLPNFLNGLMDSCHTAMEKFVGKRYQECLNKNKLILSGTVAYVTVKLLYP) are mitochondrial intermembrane. Residues 178 to 198 (VRIFISIWGAPYFGKWLLLPF) traverse the membrane as a helical segment. The Mitochondrial matrix segment spans residues 199-207 (QKLKHLIKK).

The protein belongs to the MRX11 family. In terms of assembly, associates with the mitochondrial ribosome.

Its subcellular location is the mitochondrion. It is found in the mitochondrion inner membrane. In terms of biological role, component of MIOREX complexes, large expressome-like assemblies of ribosomes with factors involved in all the steps of post-transcriptional gene expression. In Saccharomyces cerevisiae (strain ATCC 204508 / S288c) (Baker's yeast), this protein is MIOREX complex component 11.